The primary structure comprises 396 residues: Subtilisin-like protease 5 (396 aa).

A signal peptide spans 1–20 (MTGFFTILSFSLAALSVTNA). Residues 21–116 (AQILSVPKGA…VEPDAIISQH (96 aa)) constitute a propeptide that is removed on maturation. Positions 37–113 (YIVVMKDDTS…VAFVEPDAII (77 aa)) constitute an Inhibitor I9 domain. One can recognise a Peptidase S8 domain in the interval 125–396 (PWGLSRLSNR…SRLLYNGSGR (272 aa)). Catalysis depends on charge relay system residues Asp-156 and His-187. N-linked (GlcNAc...) asparagine glycosylation is found at Asn-230 and Asn-248. Ser-342 serves as the catalytic Charge relay system. Positions 376 to 389 (PTIRNPGPDTTSRL) are enriched in polar residues. Residues 376-396 (PTIRNPGPDTTSRLLYNGSGR) form a disordered region. Asn-392 is a glycosylation site (N-linked (GlcNAc...) asparagine).

This sequence belongs to the peptidase S8 family.

The protein resides in the secreted. Functionally, secreted subtilisin-like serine protease with keratinolytic activity that contributes to pathogenicity. The chain is Subtilisin-like protease 5 (SUB5) from Arthroderma benhamiae (strain ATCC MYA-4681 / CBS 112371) (Trichophyton mentagrophytes).